The chain runs to 541 residues: Zinc finger CCHC domain-containing protein 7 (541 aa).

The segment at 111 to 144 (AEEKTQSPATSHSNKVAQKCKRNNKKPKPEERPG) is disordered. Residues 116-126 (QSPATSHSNKV) are compositionally biased toward polar residues. Glycyl lysine isopeptide (Lys-Gly) (interchain with G-Cter in SUMO2) cross-links involve residues K129, K136, K138, K234, and K249. CCHC-type zinc fingers lie at residues 236 to 253 (VTCRNCDKRGHLSKNCPL), 258 to 275 (RACCLCSERGHLQYGCPA), and 299 to 316 (KRCDRCDMIGHHADACPE). A Glycyl lysine isopeptide (Lys-Gly) (interchain with G-Cter in SUMO2) cross-link involves residue K334. Residues 343–360 (VYCYNCAQKGHYGHECTE) form a CCHC-type 4 zinc finger. Residues 394–541 (VKDLKKNGDF…KKKKPKPSGL (148 aa)) are disordered. Glycyl lysine isopeptide (Lys-Gly) (interchain with G-Cter in SUMO2) cross-links involve residues K408 and K431. Over residues 418 to 434 (RRHHDMRKSRSPRKYRR) the composition is skewed to basic residues. Residues 435-452 (WPRENKETQKEKTRSREG) show a composition bias toward basic and acidic residues. K473 participates in a covalent cross-link: Glycyl lysine isopeptide (Lys-Gly) (interchain with G-Cter in SUMO2). The segment covering 474–486 (PNASGCANNQKPS) has biased composition (polar residues). The residue at position 477 (S477) is a Phosphoserine. Glycyl lysine isopeptide (Lys-Gly) (interchain with G-Cter in SUMO2) cross-links involve residues K484 and K487. The segment covering 487–497 (KSLHHASHYHR) has biased composition (basic residues). Composition is skewed to basic and acidic residues over residues 498-509 (LREERLLRESKR) and 517-527 (STEDGSHDDLF). A Glycyl lysine isopeptide (Lys-Gly) (interchain with G-Cter in SUMO2) cross-link involves residue K530. Over residues 530 to 541 (KQKKKKPKPSGL) the composition is skewed to basic residues.

Component of a nucleolar TRAMP-like complex, an ATP-dependent exosome regulatory complex consisting of a helicase (MTREX), an oligadenylate polymerase (TENT4B or TENT4A), and a substrate specific RNA-binding factor (ZCCHC7 or ZCCHC8). Several TRAMP-like complexes exist with specific compositions and are associated with nuclear, or nucleolar RNA exosomes.

It localises to the nucleus. The protein localises to the nucleolus. The sequence is that of Zinc finger CCHC domain-containing protein 7 (Zcchc7) from Mus musculus (Mouse).